The following is a 260-amino-acid chain: 3-alpha-(or 20-beta)-hydroxysteroid dehydrogenase (260 aa).

The NAD(+) site is built by R17, M19, D38, D61, V62, N88, Y153, K157, V186, T188, and T191. Residue Y153 is the Proton acceptor of the active site.

Belongs to the short-chain dehydrogenases/reductases (SDR) family. Homotetramer.

It carries out the reaction androstan-3alpha,17beta-diol + NAD(+) = 17beta-hydroxyandrostanone + NADH + H(+). It functions in the pathway lipid metabolism; steroid degradation. Its function is as follows. Probably involved in steroid metabolism. The protein is 3-alpha-(or 20-beta)-hydroxysteroid dehydrogenase (fabG3) of Mycobacterium tuberculosis (strain CDC 1551 / Oshkosh).